Here is a 1004-residue protein sequence, read N- to C-terminus: ABC transporter G family member 25 (1004 aa).

The N-terminal stretch at 1 to 27 is a signal peptide; sequence MAASQLLAAAVAAAVFLAALLVPPARC. The helical transmembrane segment at 271 to 291 threads the bilayer; it reads ATALFGGILIVILSVVLLLVY. The tract at residues 343-373 is disordered; that stretch reads SDQLAASSNEARHATEGNGKRSKNRKKLAHA. Basic and acidic residues predominate over residues 352 to 361; that stretch reads EARHATEGNG. Residues 362–372 are compositionally biased toward basic residues; the sequence is KRSKNRKKLAH. The region spanning 419-659 is the ABC transporter domain; the sequence is VVFKGLTLSI…FSSLGIKVPE (241 aa). Position 451–458 (451–458) interacts with ATP; it reads GPSGAGKT. 6 helical membrane passes run 776-796, 804-824, 886-906, 907-927, 943-963, and 978-998; these read ATLQ…IGTI, FGVA…QLAA, LVFL…AIWF, ELGL…LVGT, WALE…WLIT, and FVLC…IALL.

It belongs to the ABC transporter superfamily. ABCG family. Eye pigment precursor importer (TC 3.A.1.204) subfamily.

It localises to the membrane. This chain is ABC transporter G family member 25, found in Oryza sativa subsp. japonica (Rice).